A 264-amino-acid polypeptide reads, in one-letter code: 3-methyl-2-oxobutanoate hydroxymethyltransferase (264 aa).

Positions 45 and 84 each coordinate Mg(2+). Residues 45 to 46, Asp84, and Lys112 contribute to the 3-methyl-2-oxobutanoate site; that span reads DS. A Mg(2+)-binding site is contributed by Glu114. The active-site Proton acceptor is the Glu181.

This sequence belongs to the PanB family. In terms of assembly, homodecamer; pentamer of dimers. Mg(2+) serves as cofactor.

The protein resides in the cytoplasm. The catalysed reaction is 3-methyl-2-oxobutanoate + (6R)-5,10-methylene-5,6,7,8-tetrahydrofolate + H2O = 2-dehydropantoate + (6S)-5,6,7,8-tetrahydrofolate. It functions in the pathway cofactor biosynthesis; (R)-pantothenate biosynthesis; (R)-pantoate from 3-methyl-2-oxobutanoate: step 1/2. In terms of biological role, catalyzes the reversible reaction in which hydroxymethyl group from 5,10-methylenetetrahydrofolate is transferred onto alpha-ketoisovalerate to form ketopantoate. The protein is 3-methyl-2-oxobutanoate hydroxymethyltransferase of Pseudoalteromonas translucida (strain TAC 125).